The primary structure comprises 198 residues: Ribonuclease HII (198 aa).

The RNase H type-2 domain occupies 10–198 (HLVAGVDEVG…PVKRALELAS (189 aa)). A divalent metal cation-binding residues include Asp16, Glu17, and Asp108.

The protein belongs to the RNase HII family. It depends on Mn(2+) as a cofactor. The cofactor is Mg(2+).

The protein localises to the cytoplasm. The enzyme catalyses Endonucleolytic cleavage to 5'-phosphomonoester.. Functionally, endonuclease that specifically degrades the RNA of RNA-DNA hybrids. This Salmonella arizonae (strain ATCC BAA-731 / CDC346-86 / RSK2980) protein is Ribonuclease HII.